The following is a 110-amino-acid chain: Small ribosomal subunit protein bS16 (110 aa).

Residues valine 81 to alanine 104 show a composition bias toward basic and acidic residues. The interval valine 81 to glutamate 110 is disordered.

The protein belongs to the bacterial ribosomal protein bS16 family.

The sequence is that of Small ribosomal subunit protein bS16 from Prochlorococcus marinus (strain NATL2A).